Here is a 338-residue protein sequence, read N- to C-terminus: Aspartate-semialdehyde dehydrogenase (338 aa).

NADP(+) contacts are provided by residues Ser-13 to Val-16 and Arg-41 to Ser-42. Phosphate is bound at residue Arg-101. Catalysis depends on Cys-132, which acts as the Acyl-thioester intermediate. Gln-159 provides a ligand contact to substrate. NADP(+) is bound by residues Ser-162 to Gly-163 and Pro-187. A phosphate-binding site is contributed by Lys-216. Residue Arg-238 coordinates substrate. The active-site Proton acceptor is the His-245. Asn-317 is an NADP(+) binding site.

Belongs to the aspartate-semialdehyde dehydrogenase family. As to quaternary structure, homodimer.

The catalysed reaction is L-aspartate 4-semialdehyde + phosphate + NADP(+) = 4-phospho-L-aspartate + NADPH + H(+). Its pathway is amino-acid biosynthesis; L-lysine biosynthesis via DAP pathway; (S)-tetrahydrodipicolinate from L-aspartate: step 2/4. It participates in amino-acid biosynthesis; L-methionine biosynthesis via de novo pathway; L-homoserine from L-aspartate: step 2/3. The protein operates within amino-acid biosynthesis; L-threonine biosynthesis; L-threonine from L-aspartate: step 2/5. In terms of biological role, catalyzes the NADPH-dependent formation of L-aspartate-semialdehyde (L-ASA) by the reductive dephosphorylation of L-aspartyl-4-phosphate. The sequence is that of Aspartate-semialdehyde dehydrogenase from Shewanella sp. (strain DB6705).